The primary structure comprises 265 residues: Synaptoporin (265 aa).

At 1–4 the chain is on the cytoplasmic side; sequence MCMV. Residues 1–202 form the MARVEL domain; it reads MCMVIFAPLF…NIWFVFKETG (202 aa). Residues 5–25 traverse the membrane as a helical segment; sequence IFAPLFAIFAFATCGGYSGGL. The Vesicular segment spans residues 26 to 81; the sequence is RLSVDCVNKTESNLSIDIAFAYPFRLHQVTFEVPTCEGKERQKLALVGDSSSSAEF. Asn33 and Asn38 each carry an N-linked (GlcNAc...) asparagine glycan. Residues 82–102 form a helical membrane-spanning segment; the sequence is FVTVAVFAFLYSLAATVVYIF. Topologically, residues 103-114 are cytoplasmic; the sequence is FQNKYRENNRGP. A helical transmembrane segment spans residues 115 to 135; the sequence is LIDFIVTVVFSFLWLVGSSAW. Topologically, residues 136-177 are vesicular; sequence AKGLSDVKVATDPKEVLLLMSACKQPSNKCMAVHSPVMSSLN. Residue Asn177 is glycosylated (N-linked (GlcNAc...) asparagine). A helical transmembrane segment spans residues 178–198; that stretch reads TSVVFGFLNFILWAGNIWFVF. At 199–265 the chain is on the cytoplasmic side; it reads KETGWHSSGQ…SGPTSFNNQI (67 aa). Repeat unit 1 spans residues 210–214; the sequence is YLSDP. The segment at 210–242 is 5 X approximate repeats; sequence YLSDPMEKHSSSYNQGGYNQDSYGSSGGYSQQA. Residues Ser212 and Ser220 each carry the phosphoserine modification. Residues 221–265 are disordered; that stretch reads SYNQGGYNQDSYGSSGGYSQQASLGPTSDEFGQQPSGPTSFNNQI. 4 repeat units span residues 222–226, 227–231, 232–236, and 238–242. A compositionally biased stretch (low complexity) spans 224 to 243; sequence QGGYNQDSYGSSGGYSQQAS. A compositionally biased stretch (polar residues) spans 244 to 265; sequence LGPTSDEFGQQPSGPTSFNNQI.

Belongs to the synaptophysin/synaptobrevin family. As to expression, central nervous system.

It is found in the cytoplasmic vesicle. Its subcellular location is the secretory vesicle. It localises to the synaptic vesicle membrane. The protein localises to the synapse. The protein resides in the synaptosome. Functionally, intrinsic membrane protein of small synaptic vesicles. Probable vesicular channel protein. The chain is Synaptoporin (Synpr) from Rattus norvegicus (Rat).